We begin with the raw amino-acid sequence, 376 residues long: uncharacterized protein (376 aa).

A signal peptide spans Met1 to Ala22.

The protein belongs to the ascovirus HvAV ORF17 family.

This is an uncharacterized protein from Heliothis virescens ascovirus 3e (HvAV-3e).